We begin with the raw amino-acid sequence, 105 residues long: uncharacterized protein (105 aa).

This is an uncharacterized protein from Orgyia pseudotsugata multicapsid polyhedrosis virus (OpMNPV).